The chain runs to 1113 residues: Protein translocase subunit SecA (1113 aa).

ATP-binding positions include Gln175, 193 to 197 (GEGKT), and Asp694. Positions 1042 to 1072 (RHAAEQRTDMSKYRTQKDDIEAQQKAQRDAA) are enriched in basic and acidic residues. The segment at 1042–1113 (RHAAEQRTDM…KFKQCHGRNL (72 aa)) is disordered. Zn(2+) contacts are provided by Cys1097, Cys1099, Cys1108, and His1109. The span at 1103 to 1113 (KKFKQCHGRNL) shows a compositional bias: basic residues.

Belongs to the SecA family. As to quaternary structure, monomer and homodimer. Part of the essential Sec protein translocation apparatus which comprises SecA, SecYEG and auxiliary proteins SecDF. Other proteins may also be involved. Requires Zn(2+) as cofactor.

The protein resides in the cell inner membrane. Its subcellular location is the cytoplasm. It catalyses the reaction ATP + H2O + cellular proteinSide 1 = ADP + phosphate + cellular proteinSide 2.. Functionally, part of the Sec protein translocase complex. Interacts with the SecYEG preprotein conducting channel. Has a central role in coupling the hydrolysis of ATP to the transfer of proteins into and across the cell membrane, serving as an ATP-driven molecular motor driving the stepwise translocation of polypeptide chains across the membrane. This is Protein translocase subunit SecA from Porphyromonas gingivalis (strain ATCC 33277 / DSM 20709 / CIP 103683 / JCM 12257 / NCTC 11834 / 2561).